A 1358-amino-acid chain; its full sequence is DNA-directed RNA polymerase subunit beta (1358 aa).

It belongs to the RNA polymerase beta chain family. As to quaternary structure, the RNAP catalytic core consists of 2 alpha, 1 beta, 1 beta' and 1 omega subunit. When a sigma factor is associated with the core the holoenzyme is formed, which can initiate transcription.

The catalysed reaction is RNA(n) + a ribonucleoside 5'-triphosphate = RNA(n+1) + diphosphate. In terms of biological role, DNA-dependent RNA polymerase catalyzes the transcription of DNA into RNA using the four ribonucleoside triphosphates as substrates. In Francisella tularensis subsp. mediasiatica (strain FSC147), this protein is DNA-directed RNA polymerase subunit beta.